Consider the following 297-residue polypeptide: Pyridoxal 5'-phosphate synthase subunit SNZ1 (297 aa).

D23 lines the D-ribose 5-phosphate pocket. The active-site Schiff-base intermediate with D-ribose 5-phosphate is the K80. G152 serves as a coordination point for D-ribose 5-phosphate. Residue R164 coordinates D-glyceraldehyde 3-phosphate. D-ribose 5-phosphate is bound by residues G214 and 235-236 (GS).

The protein belongs to the PdxS/SNZ family. Homohexamer. Interacts with AIM18.

The enzyme catalyses aldehydo-D-ribose 5-phosphate + D-glyceraldehyde 3-phosphate + L-glutamine = pyridoxal 5'-phosphate + L-glutamate + phosphate + 3 H2O + H(+). It functions in the pathway cofactor biosynthesis; pyridoxal 5'-phosphate biosynthesis. Its function is as follows. Catalyzes the formation of pyridoxal 5'-phosphate from ribose 5-phosphate (RBP), glyceraldehyde 3-phosphate (G3P) and ammonia. The ammonia is provided by a SNO isoform. Can also use ribulose 5-phosphate and dihydroxyacetone phosphate as substrates, resulting from enzyme-catalyzed isomerization of RBP and G3P, respectively. The polypeptide is Pyridoxal 5'-phosphate synthase subunit SNZ1 (SNZ1) (Saccharomyces cerevisiae (strain ATCC 204508 / S288c) (Baker's yeast)).